The following is a 393-amino-acid chain: Formate-dependent phosphoribosylglycinamide formyltransferase (393 aa).

Residues 17-18 (EL) and glutamate 77 each bind N(1)-(5-phospho-beta-D-ribosyl)glycinamide. ATP-binding positions include arginine 109, lysine 150, 155–160 (SSGKGQ), 190–193 (EEFL), and glutamate 198. An ATP-grasp domain is found at 114 to 304 (DLAAGELGLR…EFELHLRAVL (191 aa)). Glutamate 263 and glutamate 275 together coordinate Mg(2+). Residues aspartate 282, lysine 354, and 361 to 362 (RR) each bind N(1)-(5-phospho-beta-D-ribosyl)glycinamide.

Belongs to the PurK/PurT family. As to quaternary structure, homodimer.

The catalysed reaction is N(1)-(5-phospho-beta-D-ribosyl)glycinamide + formate + ATP = N(2)-formyl-N(1)-(5-phospho-beta-D-ribosyl)glycinamide + ADP + phosphate + H(+). Its pathway is purine metabolism; IMP biosynthesis via de novo pathway; N(2)-formyl-N(1)-(5-phospho-D-ribosyl)glycinamide from N(1)-(5-phospho-D-ribosyl)glycinamide (formate route): step 1/1. Functionally, involved in the de novo purine biosynthesis. Catalyzes the transfer of formate to 5-phospho-ribosyl-glycinamide (GAR), producing 5-phospho-ribosyl-N-formylglycinamide (FGAR). Formate is provided by PurU via hydrolysis of 10-formyl-tetrahydrofolate. The polypeptide is Formate-dependent phosphoribosylglycinamide formyltransferase (Synechococcus sp. (strain RCC307)).